The following is a 226-amino-acid chain: UPF0173 metal-dependent hydrolase GFO_2312 (226 aa).

The protein belongs to the UPF0173 family.

This chain is UPF0173 metal-dependent hydrolase GFO_2312, found in Christiangramia forsetii (strain DSM 17595 / CGMCC 1.15422 / KT0803) (Gramella forsetii).